Reading from the N-terminus, the 2293-residue chain is G-protein coupled receptor 179 (2293 aa).

The signal sequence occupies residues 1–27; that stretch reads MGARAVVISSLAWGLLSCCFLCSGALG. A cache-like region region spans residues 62–245; that stretch reads FLYSGDVQRL…CHEGQLRPGW (184 aa). The N-linked (GlcNAc...) asparagine glycan is linked to Asn-75. A disulfide bridge links Cys-76 with Cys-236. Asn-298 carries an N-linked (GlcNAc...) asparagine glycan. Transmembrane regions (helical) follow at residues 383–403, 416–436, 445–465, 494–514, 544–564, 585–602, and 608–628; these read AVLACQACCMLAVFLSMLVAY, IVLLETILFGSLLLYFPVFIL, CVALRWVRLLGFAVVYGTIIL, LGQLLLLVLGFLVVWTAGALE, YIMVVAEMLLLCWGSFLCYAT, LLLSTAFHTARFVLVPSL, and LLLFFLHTHSTVTATLALIFI. A disulfide bond links Cys-445 and Cys-537. N-linked (GlcNAc...) asparagine glycosylation is present at Asn-661. The segment at 733-812 is disordered; the sequence is QHSRDSGSLG…GRESLADGPP (80 aa). A compositionally biased stretch (low complexity) spans 738–759; sequence SGSLGLGSLPGSSRRRLLSSSL. The segment covering 773-782 has biased composition (basic and acidic residues); the sequence is STYDHHREHN. The N-linked (GlcNAc...) asparagine glycan is linked to Asn-823. 11 disordered regions span residues 872–935, 1046–1235, 1275–1294, 1326–1345, 1388–1411, 1479–1560, 1578–1770, 1792–1828, 1844–1882, 1924–2051, and 2212–2293; these read EERK…HPPI, GTGE…NPAL, ERTEGGSLEKKPSRQVLSRS, EAVCPWESPDSGGLSPQLVH, GTSTQRVQELPEERQKSPKKATFW, ELAG…HGGS, ATLS…VCPW, TVGKGLEREPGCEPERQRRQNLEEAGLPFQEEGTSKG, WKPPAQVPKVSDLPLSTVGQGVEGQSLEASDRASEKGEL, SSSH…GSEK, and FLPE…WDCE. Residues 1080–1089 are compositionally biased toward polar residues; that stretch reads LKTPLQQGSV. 3 stretches are compositionally biased toward basic and acidic residues: residues 1105–1123, 1173–1186, and 1275–1286; these read TYKEKDGGEGTPETEKGKP, CQKEGSREQEDRNK, and ERTEGGSLEKKP. Composition is skewed to basic and acidic residues over residues 1546 to 1555 and 1597 to 1632; these read ASSKAGEKLL and RTSEHPSKGEVHKDEEKMPGRARIKAQEEAEGRIQK. Polar residues predominate over residues 1644 to 1663; that stretch reads PGSTPQRDTEKAQASLQRQG. 2 stretches are compositionally biased toward basic and acidic residues: residues 1682 to 1698 and 1717 to 1728; these read GEERTIGAEASEARPND and KKSERLGSEKEV. The segment covering 1737–1747 has biased composition (polar residues); sequence PGDSSQQPDTP. Basic and acidic residues-rich tracts occupy residues 1748–1761, 1796–1813, and 1872–1882; these read NTEKLKDELQEHGS, GLEREPGCEPERQRRQNL, and ASDRASEKGEL. The span at 1937-1948 shows a compositional bias: polar residues; the sequence is RVSSQPLVSTGD. Basic and acidic residues predominate over residues 1979-2007; sequence TETEMSRQDEKEKSQEEKERAPETRDHEG. The span at 2283–2293 shows a compositional bias: pro residues; it reads SPPPDYPWDCE.

This sequence belongs to the G-protein coupled receptor 3 family. As to quaternary structure, homodimer. Associates with the R7 group RGS-GNB5 complexes, composed of an R7 group RGS subunit (RGS6, RGS7, RGS9 or RGS11) and GNB5, promoting their localization to the cell membrane and regulating the GTPase activator activity of R7 RGS proteins. Interacts with TRPM1. Interacts with GRM6. Interacts with EGFLAM; transsynaptic interaction is required for synaptic organization of photoreceptor cells.

The protein resides in the cell membrane. It localises to the postsynaptic cell membrane. The protein localises to the cell projection. Its subcellular location is the dendrite. Functionally, orphan receptor involved in vision. Required for signal transduction through retinal depolarizing bipolar cells. Acts as an atypical G-protein coupled receptor that recruits and regulates the R7 group RGS-GNB5 complexes instead of activating G proteins: promotes the GTPase activator activity of R7 RGS proteins, increasing the GTPase activity of G protein alpha subunits, thereby driving them into their inactive GDP-bound form. Associates with components of metabotropic signaling cascade in retina ON-bipolar neurons, such as TRPM1 and GRM6: may control the ability of the GRM6 cascade to gate TRPM1. This is G-protein coupled receptor 179 from Mus musculus (Mouse).